Here is a 479-residue protein sequence, read N- to C-terminus: Adenosylhomocysteinase (479 aa).

3 residues coordinate substrate: threonine 56, aspartate 133, and glutamate 199. NAD(+) is bound at residue 200 to 202; sequence TTT. The substrate site is built by lysine 229 and aspartate 233. NAD(+) is bound by residues asparagine 234, 263–268, glutamate 286, asparagine 321, 342–344, and asparagine 390; these read GYGDVG and IGH.

This sequence belongs to the adenosylhomocysteinase family. In terms of assembly, homotetramer. NAD(+) serves as cofactor.

The catalysed reaction is S-adenosyl-L-homocysteine + H2O = L-homocysteine + adenosine. Its pathway is amino-acid biosynthesis; L-homocysteine biosynthesis; L-homocysteine from S-adenosyl-L-homocysteine: step 1/1. In terms of biological role, adenosylhomocysteine is a competitive inhibitor of S-adenosyl-L-methionine-dependent methyl transferase reactions; therefore adenosylhomocysteinase may play a key role in the control of methylations via regulation of the intracellular concentration of adenosylhomocysteine. The chain is Adenosylhomocysteinase from Plasmodium yoelii yoelii.